We begin with the raw amino-acid sequence, 302 residues long: Probable histone acetyltransferase Rv0428c (302 aa).

It catalyses the reaction L-lysyl-[histone] + acetyl-CoA = N(6)-acetyl-L-lysyl-[histone] + CoA + H(+). Shows histone acetyl transferase (HAT) activity with recombinant eukaryotic H3 histone expressed in bacteria as substrate and acetyl-CoA as donor. May be involved in survival under stress conditions. This is Probable histone acetyltransferase Rv0428c from Mycobacterium tuberculosis (strain ATCC 25618 / H37Rv).